The following is a 301-amino-acid chain: Glutamyl-Q tRNA(Asp) synthetase (301 aa).

L-glutamate-binding positions include 8-12 and Glu44; that span reads RFAPS. The short motif at 11–21 is the 'HIGH' region element; that stretch reads PSPTGPLHFGS. Cys100, Cys102, Tyr122, and Cys126 together coordinate Zn(2+). Tyr180 and Arg198 together coordinate L-glutamate. Residues 236–240 carry the 'KMSKS' region motif; sequence KLSKQ. Residue Lys239 participates in ATP binding.

The protein belongs to the class-I aminoacyl-tRNA synthetase family. GluQ subfamily. The cofactor is Zn(2+).

Catalyzes the tRNA-independent activation of glutamate in presence of ATP and the subsequent transfer of glutamate onto a tRNA(Asp). Glutamate is transferred on the 2-amino-5-(4,5-dihydroxy-2-cyclopenten-1-yl) moiety of the queuosine in the wobble position of the QUC anticodon. This is Glutamyl-Q tRNA(Asp) synthetase from Dechloromonas aromatica (strain RCB).